The primary structure comprises 383 residues: Succinyl-diaminopimelate desuccinylase (383 aa).

Zn(2+) is bound at residue H72. D74 is a catalytic residue. D105 is a Zn(2+) binding site. The active-site Proton acceptor is E137. Zn(2+) contacts are provided by E138, E167, and H352.

Belongs to the peptidase M20A family. DapE subfamily. As to quaternary structure, homodimer. It depends on Zn(2+) as a cofactor. Co(2+) is required as a cofactor.

It carries out the reaction N-succinyl-(2S,6S)-2,6-diaminopimelate + H2O = (2S,6S)-2,6-diaminopimelate + succinate. The protein operates within amino-acid biosynthesis; L-lysine biosynthesis via DAP pathway; LL-2,6-diaminopimelate from (S)-tetrahydrodipicolinate (succinylase route): step 3/3. Catalyzes the hydrolysis of N-succinyl-L,L-diaminopimelic acid (SDAP), forming succinate and LL-2,6-diaminopimelate (DAP), an intermediate involved in the bacterial biosynthesis of lysine and meso-diaminopimelic acid, an essential component of bacterial cell walls. This chain is Succinyl-diaminopimelate desuccinylase, found in Ehrlichia ruminantium (strain Welgevonden).